Consider the following 337-residue polypeptide: D-lactate dehydrogenase (337 aa).

NAD(+)-binding positions include 156 to 157, Asp176, 207 to 208, Asn213, 234 to 236, and Asp260; these read HI, VP, and CSR. Arg236 is an active-site residue. Glu265 is an active-site residue. His297 serves as the catalytic Proton donor.

It belongs to the D-isomer specific 2-hydroxyacid dehydrogenase family. Homodimer.

It catalyses the reaction (R)-lactate + NAD(+) = pyruvate + NADH + H(+). The chain is D-lactate dehydrogenase from Lactobacillus helveticus (Lactobacillus suntoryeus).